The primary structure comprises 615 residues: 3-(3-hydroxy-phenyl)propionate/3-hydroxycinnamic acid hydroxylase 1 (615 aa).

The disordered stretch occupies residues 1-20 (MRPAFEPAAGLGRAHPHETT). FAD is bound by residues 27–56 (DVAI…VVEK) and 294–304 (FRVKRILLAGD).

Belongs to the PheA/TfdB FAD monooxygenase family. FAD serves as cofactor.

It catalyses the reaction 3-(3-hydroxyphenyl)propanoate + NADH + O2 + H(+) = 3-(2,3-dihydroxyphenyl)propanoate + NAD(+) + H2O. The catalysed reaction is (2E)-3-(3-hydroxyphenyl)prop-2-enoate + NADH + O2 + H(+) = (2E)-3-(2,3-dihydroxyphenyl)prop-2-enoate + NAD(+) + H2O. It functions in the pathway aromatic compound metabolism; 3-phenylpropanoate degradation. Functionally, catalyzes the insertion of one atom of molecular oxygen into position 2 of the phenyl ring of 3-(3-hydroxyphenyl)propionate (3-HPP) and hydroxycinnamic acid (3HCI). This Burkholderia vietnamiensis (strain G4 / LMG 22486) (Burkholderia cepacia (strain R1808)) protein is 3-(3-hydroxy-phenyl)propionate/3-hydroxycinnamic acid hydroxylase 1.